A 379-amino-acid chain; its full sequence is Alpha-humulene synthase eupE (379 aa).

Belongs to the terpene synthase family. Alpha-humulene synthase eupE subfamily. Mg(2+) is required as a cofactor.

It carries out the reaction (2E,6E)-farnesyl diphosphate = alpha-humulene + diphosphate. It participates in secondary metabolite biosynthesis; terpenoid biosynthesis. In terms of biological role, alpha-humulene synthase; part of the gene cluster that mediates the biosynthesis of eupenifeldin, a bistropolone meroterpenoid that acts as an antitumor agent. The first step of eupenifeldin biosynthesis is the biosynthesis of 3-methylorcinaldehyde performed by the non-reducing polyketide synthase eupA. Oxidative dearomatization of 3-methylorcinaldehyde likely catalyzed by the FAD-dependent monooxygenase eupB is followed by oxidative ring expansion by the 2-oxoglutarate-dependent dioxygenase eupC to provide the first tropolone metabolite, tropolone stipitaldehyde. In parallel, generation of sesquiterpene alpha-humulene from farnesylpyrophosphate (FPP) is catalyzed by the terpene cyclase eupE. The cytochrome P450 monooxygenase eupD then hydroxylates humulene to humulenol. The putative Diels-Alderase eupF probably catalyzes the formation of the tropolone-humulene skeleton by linking humulenol and the polyketide moiety. The short-chain dehydrogenase/reductase eupG and the flavin-dependent monooxygenase eupH are also essential for eupenifeldin biosynthesis and are likely the additional decorating enzymes of the tropolone-humulene skeleton to produce final eupenifeldin or derivatives. The protein is Alpha-humulene synthase eupE of Phoma sp.